Reading from the N-terminus, the 753-residue chain is 5-methyltetrahydropteroyltriglutamate--homocysteine methyltransferase (753 aa).

5-methyltetrahydropteroyltri-L-glutamate is bound by residues 17-20 (RELK) and Lys-117. L-homocysteine contacts are provided by residues 431 to 433 (IGS) and Glu-484. L-methionine is bound by residues 431-433 (IGS) and Glu-484. 5-methyltetrahydropteroyltri-L-glutamate is bound by residues 515-516 (RC) and Trp-561. Asp-599 contacts L-homocysteine. Asp-599 serves as a coordination point for L-methionine. Glu-605 serves as a coordination point for 5-methyltetrahydropteroyltri-L-glutamate. The Zn(2+) site is built by His-641, Cys-643, and Glu-665. The active-site Proton donor is His-694. Cys-726 serves as a coordination point for Zn(2+).

Belongs to the vitamin-B12 independent methionine synthase family. Zn(2+) is required as a cofactor.

The catalysed reaction is 5-methyltetrahydropteroyltri-L-glutamate + L-homocysteine = tetrahydropteroyltri-L-glutamate + L-methionine. Its pathway is amino-acid biosynthesis; L-methionine biosynthesis via de novo pathway; L-methionine from L-homocysteine (MetE route): step 1/1. Its function is as follows. Catalyzes the transfer of a methyl group from 5-methyltetrahydrofolate to homocysteine resulting in methionine formation. This is 5-methyltetrahydropteroyltriglutamate--homocysteine methyltransferase from Escherichia coli (strain UTI89 / UPEC).